The primary structure comprises 68 residues: MKNQFVLLLLAIVFLQMIFQSDAILSAIWSGIKSLFGKRGLENMDKFDELFDGDLSEADLDFLKELMR.

The first 23 residues, 1-23, serve as a signal peptide directing secretion; sequence MKNQFVLLLLAIVFLQMIFQSDA. Phenylalanine amide is present on Phe-36. The propeptide occupies 40-68; sequence GLENMDKFDELFDGDLSEADLDFLKELMR.

Belongs to the non-disulfide-bridged peptide (NDBP) superfamily. Short antimicrobial peptide (group 4) family. The non-amidated UyCT3 does not show antimicrobial activity. Expressed by the venom gland.

Its subcellular location is the secreted. It is found in the target cell membrane. In terms of biological role, antimicrobial peptide that inhibits the growth of Gram-positive (S.aureus, MIC=10 uM) and Gram-negative bacteria (E.coli, MIC=15 uM and P.aeruginosa, MIC=6 uM). It also shows 35% of hemolysis when 15 uM are tested (95% at 50 uM). In Urodacus yaschenkoi (Inland robust scorpion), this protein is Antimicrobial peptide UyCT3.